Consider the following 315-residue polypeptide: Replication factor C small subunit (315 aa).

43-50 (GSPGVGKT) is an ATP binding site.

This sequence belongs to the activator 1 small subunits family. RfcS subfamily. In terms of assembly, heteromultimer composed of small subunits (RfcS) and large subunits (RfcL).

Its function is as follows. Part of the RFC clamp loader complex which loads the PCNA sliding clamp onto DNA. The chain is Replication factor C small subunit from Methanococcus maripaludis (strain C6 / ATCC BAA-1332).